Here is a 308-residue protein sequence, read N- to C-terminus: Ribosomal RNA small subunit methyltransferase H (308 aa).

Residues 36 to 38 (GGH), aspartate 55, phenylalanine 82, aspartate 103, and glutamine 110 contribute to the S-adenosyl-L-methionine site.

The protein belongs to the methyltransferase superfamily. RsmH family.

The protein localises to the cytoplasm. The catalysed reaction is cytidine(1402) in 16S rRNA + S-adenosyl-L-methionine = N(4)-methylcytidine(1402) in 16S rRNA + S-adenosyl-L-homocysteine + H(+). In terms of biological role, specifically methylates the N4 position of cytidine in position 1402 (C1402) of 16S rRNA. The chain is Ribosomal RNA small subunit methyltransferase H from Helicobacter pylori (strain J99 / ATCC 700824) (Campylobacter pylori J99).